Consider the following 534-residue polypeptide: Prolyl 4-hydroxylase subunit alpha-1 (534 aa).

Residues 1 to 17 (MIWYILVVGILLPQSLA) form the signal peptide. An N-linked (GlcNAc...) asparagine glycan is attached at Asn-113. The stretch at 205 to 238 (VSVLDYLSYAVYQQGDLDKALLLTKKLLELDPEH) is one TPR repeat. A disordered region spans residues 258-277 (ANKSSSDDQSDQKTTLKKKG). N-linked (GlcNAc...) asparagine glycosylation occurs at Asn-259. The region spanning 411-519 (TAEELQVANY…KWVSNKWLHE (109 aa)) is the Fe2OG dioxygenase domain. 3 residues coordinate Fe cation: His-429, Asp-431, and His-500. A 2-oxoglutarate-binding site is contributed by Lys-510.

It belongs to the P4HA family. As to quaternary structure, heterotetramer of two alpha-1 chains and two beta chains (P4HB)(the beta chain is the multi-functional PDI), where P4HB plays the role of a structural subunit; this tetramer catalyzes the formation of 4-hydroxyproline in collagen. It depends on Fe(2+) as a cofactor. L-ascorbate is required as a cofactor.

It localises to the endoplasmic reticulum lumen. It catalyses the reaction L-prolyl-[collagen] + 2-oxoglutarate + O2 = trans-4-hydroxy-L-prolyl-[collagen] + succinate + CO2. Its function is as follows. Catalyzes the post-translational formation of 4-hydroxyproline in -Xaa-Pro-Gly- sequences in collagens and other proteins. The sequence is that of Prolyl 4-hydroxylase subunit alpha-1 (P4HA1) from Bos taurus (Bovine).